Here is a 447-residue protein sequence, read N- to C-terminus: Protein king tubby (447 aa).

Composition is skewed to low complexity over residues 71–92 (GTGPNVTATSITTTPTSPYSDS) and 157–169 (NNNNHTHHTNSSS). The disordered stretch occupies residues 71 to 196 (GTGPNVTATS…GGAPDTEGDV (126 aa)).

This sequence belongs to the TUB family.

Its subcellular location is the cytoplasm. It localises to the nucleus. This chain is Protein king tubby, found in Anopheles gambiae (African malaria mosquito).